The primary structure comprises 305 residues: Cell division control protein 2 homolog C (305 aa).

Residues tyrosine 4 to phenylalanine 297 enclose the Protein kinase domain. Residues valine 10 to valine 18 and lysine 33 contribute to the ATP site. Phosphothreonine is present on threonine 14. Tyrosine 15 carries the post-translational modification Phosphotyrosine. Aspartate 138 (proton acceptor) is an active-site residue. Threonine 172 carries the phosphothreonine; by CAK modification.

The protein belongs to the protein kinase superfamily. CMGC Ser/Thr protein kinase family. CDC2/CDKX subfamily.

It carries out the reaction L-seryl-[protein] + ATP = O-phospho-L-seryl-[protein] + ADP + H(+). The catalysed reaction is L-threonyl-[protein] + ATP = O-phospho-L-threonyl-[protein] + ADP + H(+). It catalyses the reaction [DNA-directed RNA polymerase] + ATP = phospho-[DNA-directed RNA polymerase] + ADP + H(+). In terms of biological role, plays a key role in the control of the eukaryotic cell cycle. The chain is Cell division control protein 2 homolog C (CDC2C) from Antirrhinum majus (Garden snapdragon).